A 326-amino-acid polypeptide reads, in one-letter code: tRNA-modifying protein YgfZ (326 aa).

Residues Trp-27 and Trp-189 each coordinate folate.

It belongs to the tRNA-modifying YgfZ family.

It localises to the cytoplasm. In terms of biological role, folate-binding protein involved in regulating the level of ATP-DnaA and in the modification of some tRNAs. It is probably a key factor in regulatory networks that act via tRNA modification, such as initiation of chromosomal replication. The sequence is that of tRNA-modifying protein YgfZ from Shigella sonnei (strain Ss046).